The sequence spans 312 residues: Malate dehydrogenase (312 aa).

Residues 7 to 13 (GAAGGIG) and aspartate 34 contribute to the NAD(+) site. Substrate-binding residues include arginine 81 and arginine 87. NAD(+) is bound by residues asparagine 94 and 117-119 (ITN). 2 residues coordinate substrate: asparagine 119 and arginine 153. Histidine 177 serves as the catalytic Proton acceptor. Methionine 227 provides a ligand contact to NAD(+).

It belongs to the LDH/MDH superfamily. MDH type 1 family. In terms of assembly, homodimer.

It carries out the reaction (S)-malate + NAD(+) = oxaloacetate + NADH + H(+). Functionally, catalyzes the reversible oxidation of malate to oxaloacetate. The chain is Malate dehydrogenase from Photobacterium profundum (strain SS9).